Reading from the N-terminus, the 210-residue chain is Scoloptoxin SSD976 (210 aa).

The N-terminal stretch at methionine 1–glycine 23 is a signal peptide.

Contains 3 disulfide bonds. As to expression, expressed by the venom gland.

It localises to the secreted. Functionally, voltage-gated calcium channel inhibitor. This is Scoloptoxin SSD976 from Scolopendra dehaani (Thai centipede).